The chain runs to 201 residues: Large ribosomal subunit protein uL4 (201 aa).

Residues 44 to 71 (RAQKTRAEVSGSGKKPWRQKGTGRARSG) form a disordered region.

The protein belongs to the universal ribosomal protein uL4 family. Part of the 50S ribosomal subunit.

Its function is as follows. One of the primary rRNA binding proteins, this protein initially binds near the 5'-end of the 23S rRNA. It is important during the early stages of 50S assembly. It makes multiple contacts with different domains of the 23S rRNA in the assembled 50S subunit and ribosome. Forms part of the polypeptide exit tunnel. This chain is Large ribosomal subunit protein uL4, found in Photorhabdus laumondii subsp. laumondii (strain DSM 15139 / CIP 105565 / TT01) (Photorhabdus luminescens subsp. laumondii).